The chain runs to 294 residues: 4-hydroxy-tetrahydrodipicolinate synthase (294 aa).

Pyruvate is bound at residue Ser-47. Tyr-135 (proton donor/acceptor) is an active-site residue. Lys-163 acts as the Schiff-base intermediate with substrate in catalysis. Ile-205 is a binding site for pyruvate.

Belongs to the DapA family. Homotetramer; dimer of dimers.

Its subcellular location is the cytoplasm. The catalysed reaction is L-aspartate 4-semialdehyde + pyruvate = (2S,4S)-4-hydroxy-2,3,4,5-tetrahydrodipicolinate + H2O + H(+). The protein operates within amino-acid biosynthesis; L-lysine biosynthesis via DAP pathway; (S)-tetrahydrodipicolinate from L-aspartate: step 3/4. Functionally, catalyzes the condensation of (S)-aspartate-beta-semialdehyde [(S)-ASA] and pyruvate to 4-hydroxy-tetrahydrodipicolinate (HTPA). The polypeptide is 4-hydroxy-tetrahydrodipicolinate synthase (Ralstonia nicotianae (strain ATCC BAA-1114 / GMI1000) (Ralstonia solanacearum)).